A 473-amino-acid chain; its full sequence is Siroheme synthase (473 aa).

The tract at residues 1–222 (MNTQPHHSSP…GDESRADARL (222 aa)) is precorrin-2 dehydrogenase /sirohydrochlorin ferrochelatase. NAD(+) contacts are provided by residues 37–38 (EI) and 58–59 (EK). Positions 233 to 473 (GEVWLVGAGP…QVVRHRVVSP (241 aa)) are uroporphyrinogen-III C-methyltransferase. Pro-242 contributes to the S-adenosyl-L-methionine binding site. The Proton acceptor role is filled by Asp-265. The Proton donor role is filled by Lys-287. Residues 318-320 (GGD), Ile-323, 348-349 (SA), Met-401, and Gly-430 each bind S-adenosyl-L-methionine.

The protein in the N-terminal section; belongs to the precorrin-2 dehydrogenase / sirohydrochlorin ferrochelatase family. This sequence in the C-terminal section; belongs to the precorrin methyltransferase family.

The catalysed reaction is uroporphyrinogen III + 2 S-adenosyl-L-methionine = precorrin-2 + 2 S-adenosyl-L-homocysteine + H(+). It catalyses the reaction precorrin-2 + NAD(+) = sirohydrochlorin + NADH + 2 H(+). The enzyme catalyses siroheme + 2 H(+) = sirohydrochlorin + Fe(2+). It participates in cofactor biosynthesis; adenosylcobalamin biosynthesis; precorrin-2 from uroporphyrinogen III: step 1/1. Its pathway is cofactor biosynthesis; adenosylcobalamin biosynthesis; sirohydrochlorin from precorrin-2: step 1/1. The protein operates within porphyrin-containing compound metabolism; siroheme biosynthesis; precorrin-2 from uroporphyrinogen III: step 1/1. It functions in the pathway porphyrin-containing compound metabolism; siroheme biosynthesis; siroheme from sirohydrochlorin: step 1/1. It participates in porphyrin-containing compound metabolism; siroheme biosynthesis; sirohydrochlorin from precorrin-2: step 1/1. Its function is as follows. Multifunctional enzyme that catalyzes the SAM-dependent methylations of uroporphyrinogen III at position C-2 and C-7 to form precorrin-2 via precorrin-1. Then it catalyzes the NAD-dependent ring dehydrogenation of precorrin-2 to yield sirohydrochlorin. Finally, it catalyzes the ferrochelation of sirohydrochlorin to yield siroheme. This is Siroheme synthase from Gluconobacter oxydans (strain 621H) (Gluconobacter suboxydans).